Here is a 240-residue protein sequence, read N- to C-terminus: Cysteine-rich venom protein ablomin (240 aa).

Residues Met-1–Gly-19 form the signal peptide. The SCP domain occupies Val-38–Tyr-166. 8 disulfide bridges follow: Cys-75-Cys-153, Cys-92-Cys-167, Cys-148-Cys-164, Cys-186-Cys-193, Cys-189-Cys-198, Cys-202-Cys-235, Cys-211-Cys-229, and Cys-220-Cys-233. Residues Cys-202–Cys-235 form the ShKT domain.

It belongs to the CRISP family. As to expression, expressed by the venom gland.

It is found in the secreted. Blocks contraction of smooth muscle elicited by high potassium-induced depolarization, but does not block caffeine-stimulated contraction. Since high potassium-treatment activates voltage-gated channels and caffeine exposure activates ryanodine receptors, this toxin may target L-type voltage-gated calcium channels (Cav) (and not ryanodine receptors) on smooth muscle. This toxin also shows a little inhibition on cyclic nucleotide-gated CNGA1 channel. This chain is Cysteine-rich venom protein ablomin, found in Gloydius blomhoffii (Mamushi).